We begin with the raw amino-acid sequence, 440 residues long: L-gulonolactone oxidase (440 aa).

Residues Tyr-17–Gln-187 enclose the FAD-binding PCMH-type domain. At His-54 the chain carries Pros-8alpha-FAD histidine. The chain crosses the membrane as a helical span at residues Phe-253 to Ile-273.

This sequence belongs to the oxygen-dependent FAD-linked oxidoreductase family. It depends on FAD as a cofactor.

It is found in the microsome membrane. It localises to the endoplasmic reticulum membrane. It catalyses the reaction L-gulono-1,4-lactone + O2 = L-ascorbate + H2O2 + H(+). It functions in the pathway cofactor biosynthesis; L-ascorbate biosynthesis via UDP-alpha-D-glucuronate pathway; L-ascorbate from UDP-alpha-D-glucuronate: step 4/4. In terms of biological role, oxidizes L-gulono-1,4-lactone to hydrogen peroxide and L-xylo-hexulonolactone which spontaneously isomerizes to L-ascorbate. The protein is L-gulonolactone oxidase (GULO) of Bos taurus (Bovine).